The chain runs to 780 residues: Gelsolin (780 aa).

Position 1 is an N-acetylmethionine; alternate (M1). A signal peptide spans 1 to 25 (MAPYRSSLLCALLLLALCALSPSHA). An actin-severing region spans residues 51–174 (VVEHPEFLKA…YKKGGVASGF (124 aa)). The Gelsolin-like 1 repeat unit spans residues 74 to 155 (FDLVPVPPNL…EVQGFESSTF (82 aa)). The residue at position 84 (Y84) is a Phosphotyrosine. Positions 90, 91, 122, 134, 139, and 141 each coordinate Ca(2+). Residues 121-124 (DESG) form an actin-actin interfilament contact point region. 160–167 (KSGLKYKK) serves as a coordination point for a 1,2-diacyl-sn-glycero-3-phospho-(1D-myo-inositol-4,5-bisphosphate). V170 is a binding site for Ca(2+). 186-194 (RLFQVKGRR) is an a 1,2-diacyl-sn-glycero-3-phospho-(1D-myo-inositol-4,5-bisphosphate) binding site. The stretch at 196 to 268 (VRATEVPVSW…SEEGGEPEAM (73 aa)) is one Gelsolin-like 2 repeat. Ca(2+)-binding residues include G211 and D212. C213 and C226 form a disulfide bridge. Ca(2+) is bound at residue E234. The disordered stretch occupies residues 244 to 269 (GIRDNERSGRAQVHVSEEGGEPEAML). 4 residues coordinate Ca(2+): D284, E327, D328, and E352. One copy of the Gelsolin-like 3 repeat lies at 315–387 (DENPFAQGAL…LPEGGETPLF (73 aa)). Phosphotyrosine is present on residues Y407 and Y463. Residues 432–780 (AAQHGMDDDG…LDRALAELAA (349 aa)) are actin-binding, Ca-sensitive. A Gelsolin-like 4 repeat occupies 453-534 (SNKVPVDPAT…VQGKEPAHLM (82 aa)). The Ca(2+) site is built by G469, D470, E500, D512, G517, P519, and T549. Residues 575 to 640 (RAVEVMPKSG…EEGSEPDAFW (66 aa)) form a Gelsolin-like 5 repeat. At K582 the chain carries N6-acetyllysine. Positions 589 and 590 each coordinate Ca(2+). Residue Y601 is modified to Phosphotyrosine. Ca(2+) is bound at residue E612. Y649 bears the Phosphotyrosine mark. The stretch at 679–754 (IEEVPGELMQ…VRQGFEPPSF (76 aa)) is one Gelsolin-like 6 repeat. The Ca(2+) site is built by D694, D695, and E717. Position 740 is a phosphothreonine (T740).

The protein belongs to the villin/gelsolin family. As to quaternary structure, binds to actin and to fibronectin. Identified in a complex composed of ACTA1, COBL, GSN and TMSB4X. Interacts with the inactive form of EIF2AK2/PKR. Interacts with FLII. In terms of processing, phosphorylated on tyrosine residues in vitro.

Its subcellular location is the cytoplasm. It is found in the cytoskeleton. The protein resides in the secreted. Calcium-regulated, actin-modulating protein that binds to the plus (or barbed) ends of actin monomers or filaments, preventing monomer exchange (end-blocking or capping). It can promote the assembly of monomers into filaments (nucleation) as well as sever filaments already formed. Plays a role in ciliogenesis. The protein is Gelsolin (Gsn) of Mus musculus (Mouse).